Consider the following 160-residue polypeptide: Transcription elongation factor GreA (160 aa).

Residues 10–37 (TLDGKAKLENELQELKTVKRKEVVERIK) are a coiled coil.

This sequence belongs to the GreA/GreB family.

In terms of biological role, necessary for efficient RNA polymerase transcription elongation past template-encoded arresting sites. The arresting sites in DNA have the property of trapping a certain fraction of elongating RNA polymerases that pass through, resulting in locked ternary complexes. Cleavage of the nascent transcript by cleavage factors such as GreA or GreB allows the resumption of elongation from the new 3'terminus. GreA releases sequences of 2 to 3 nucleotides. The sequence is that of Transcription elongation factor GreA from Listeria innocua serovar 6a (strain ATCC BAA-680 / CLIP 11262).